We begin with the raw amino-acid sequence, 129 residues long: Small ribosomal subunit protein uS11 (129 aa).

Belongs to the universal ribosomal protein uS11 family. As to quaternary structure, part of the 30S ribosomal subunit. Interacts with proteins S7 and S18. Binds to IF-3.

Located on the platform of the 30S subunit, it bridges several disparate RNA helices of the 16S rRNA. Forms part of the Shine-Dalgarno cleft in the 70S ribosome. The protein is Small ribosomal subunit protein uS11 of Haemophilus influenzae (strain 86-028NP).